A 634-amino-acid polypeptide reads, in one-letter code: CRISPR-associated protein MJ1674 (634 aa).

Its function is as follows. CRISPR (clustered regularly interspaced short palindromic repeat) is an adaptive immune system that provides protection against mobile genetic elements (viruses, transposable elements and conjugative plasmids). CRISPR clusters contain spacers, sequences complementary to antecedent mobile elements, and target invading nucleic acids. CRISPR clusters are transcribed and processed into CRISPR RNA (crRNA). The type III Csm effector complex binds crRNA and acts as a crRNA-guided RNase, DNase and cyclic oligoadenylate synthase; binding of target RNA cognate to the crRNA is required for all activities. This is CRISPR-associated protein MJ1674 from Methanocaldococcus jannaschii (strain ATCC 43067 / DSM 2661 / JAL-1 / JCM 10045 / NBRC 100440) (Methanococcus jannaschii).